Consider the following 680-residue polypeptide: DNA-directed RNA polymerase subunit beta' (680 aa).

Zn(2+)-binding residues include C69, C71, C87, and C90. Mg(2+) is bound by residues D489, D491, and D493.

This sequence belongs to the RNA polymerase beta' chain family. RpoC1 subfamily. As to quaternary structure, in plastids the minimal PEP RNA polymerase catalytic core is composed of four subunits: alpha, beta, beta', and beta''. When a (nuclear-encoded) sigma factor is associated with the core the holoenzyme is formed, which can initiate transcription. It depends on Mg(2+) as a cofactor. The cofactor is Zn(2+).

Its subcellular location is the plastid. It is found in the chloroplast. It carries out the reaction RNA(n) + a ribonucleoside 5'-triphosphate = RNA(n+1) + diphosphate. In terms of biological role, DNA-dependent RNA polymerase catalyzes the transcription of DNA into RNA using the four ribonucleoside triphosphates as substrates. The chain is DNA-directed RNA polymerase subunit beta' from Cucumis sativus (Cucumber).